The chain runs to 215 residues: Peroxiredoxin 1 (215 aa).

The Thioredoxin domain maps to 2–157; sequence KLLGEKFPSM…ILRALKALQT (156 aa). Residue Cys-44 is the Cysteine sulfenic acid (-SOH) intermediate of the active site. Arg-120 is a binding site for substrate.

Belongs to the peroxiredoxin family. Prx6 subfamily. As to quaternary structure, homodecamer. Pentamer of dimers that assemble into a ring structure.

It localises to the cytoplasm. The catalysed reaction is a hydroperoxide + [thioredoxin]-dithiol = an alcohol + [thioredoxin]-disulfide + H2O. Thiol-specific peroxidase that catalyzes the reduction of hydrogen peroxide and organic hydroperoxides to water and alcohols, respectively. Plays a role in cell protection against oxidative stress by detoxifying peroxides. The polypeptide is Peroxiredoxin 1 (Caldanaerobacter subterraneus subsp. tengcongensis (strain DSM 15242 / JCM 11007 / NBRC 100824 / MB4) (Thermoanaerobacter tengcongensis)).